The chain runs to 435 residues: Histidine--tRNA ligase (435 aa).

Positions 415–435 are disordered; the sequence is SVPLSAFPGDYDRPTFEDFAE. Over residues 424 to 435 the composition is skewed to basic and acidic residues; sequence DYDRPTFEDFAE.

Belongs to the class-II aminoacyl-tRNA synthetase family.

Its subcellular location is the cytoplasm. It catalyses the reaction tRNA(His) + L-histidine + ATP = L-histidyl-tRNA(His) + AMP + diphosphate + H(+). The chain is Histidine--tRNA ligase from Haloarcula marismortui (strain ATCC 43049 / DSM 3752 / JCM 8966 / VKM B-1809) (Halobacterium marismortui).